Here is a 607-residue protein sequence, read N- to C-terminus: UvrABC system protein C (607 aa).

A GIY-YIG domain is found at 15 to 92 (SQPGSYQMKD…IKRYRPYFNI (78 aa)). One can recognise a UVR domain in the interval 197–232 (GKAISDIKKKMKRASDSTEYELAADFRDRLKFIDQT).

The protein belongs to the UvrC family. Interacts with UvrB in an incision complex.

The protein resides in the cytoplasm. In terms of biological role, the UvrABC repair system catalyzes the recognition and processing of DNA lesions. UvrC both incises the 5' and 3' sides of the lesion. The N-terminal half is responsible for the 3' incision and the C-terminal half is responsible for the 5' incision. This chain is UvrABC system protein C, found in Oenococcus oeni (strain ATCC BAA-331 / PSU-1).